Here is a 163-residue protein sequence, read N- to C-terminus: Adenosine 5'-monophosphoramidase HINT2 (163 aa).

Residues 1 to 17 constitute a mitochondrion transit peptide; it reads MAAAVLLAVGLRAARRT. At K45 the chain carries N6-succinyllysine. The HIT domain maps to 55-163; that stretch reads IFSRILDRSL…GGRQLQWPPG (109 aa). Positions 63 and 80 each coordinate AMP. K119 is subject to N6-acetyllysine. At K128 the chain carries N6-acetyllysine; alternate. K128 carries the N6-succinyllysine; alternate modification. Residue N136 participates in AMP binding. K139 carries the N6-acetyllysine modification. Residues 142-145 and 149-151 contribute to the AMP site; these read AQSV and HIH. A Histidine triad motif motif is present at residues 147–151; it reads HLHIH. The active-site Tele-AMP-histidine intermediate is the H149.

This sequence belongs to the HINT family.

Its subcellular location is the mitochondrion. The enzyme catalyses adenosine 5'-phosphoramidate + H2O = AMP + NH4(+). In terms of biological role, exhibits adenosine 5'-monophosphoramidase activity, hydrolyzing purine nucleotide phosphoramidates with a single phosphate group such as adenosine 5'monophosphoramidate (AMP-NH2) to yield AMP and NH2. Hydrolyzes adenosine 5'-O-p-nitrophenylphosphoramidate (AMP-pNA). May be involved in steroid biosynthesis. May play a role in apoptosis. The protein is Adenosine 5'-monophosphoramidase HINT2 of Mus musculus (Mouse).